Reading from the N-terminus, the 195-residue chain is CASP-like protein 1B1 (195 aa).

Residues 1-22 (MGLQNEEKLELGCTGLQPKPKK) are Cytoplasmic-facing. The chain crosses the membrane as a helical span at residues 23 to 43 (WVLLMVRVVAFLATAAATLVM). The Extracellular segment spans residues 44–75 (ALNKETKTLVVATVGNTPIKVTLTAKFQHTPA). The helical transmembrane segment at 76–96 (FVFFVIANGMASFHNLLMIMV) threads the bilayer. Residues 97 to 109 (ELCGQKLDYKGMR) lie on the Cytoplasmic side of the membrane. The helical transmembrane segment at 110-130 (LAMVAILDMMTVALVSGGASA) threads the bilayer. Topologically, residues 131–163 (ATFMAELGKNGNSHARWDKICDKFETFCDHGGA) are extracellular. A helical membrane pass occupies residues 164-184 (ALIASSAGLILMMIISVMSIM). Over 185–195 (KLLIKPKSDSS) the chain is Cytoplasmic.

This sequence belongs to the Casparian strip membrane proteins (CASP) family. In terms of assembly, homodimer and heterodimers.

Its subcellular location is the cell membrane. The polypeptide is CASP-like protein 1B1 (Populus trichocarpa (Western balsam poplar)).